Here is a 1535-residue protein sequence, read N- to C-terminus: MEPGCNEFLPPPECPVFEPSWAEFQDPLGYIAKIRPIAEKSGICKIRPPADWQPPFAVEVDNFRFTPRIQRLNELEAQTRVKLNYLDQIAKFWEIQGSSLKIPNVERKILDLYSLSKIVIEEGGYEAICKDRRWARVAQRLHYPPGKNIGSLLRSHYERIIYPYEMFQSGANHVQCNTHPFDNEVKDKEYKPHSIPLRQSVQPSKFSSYSRRAKRLQPDPEPTEEDIEKNPELKKLQIYGPGPKMMGLGLMAKDKDKTVHKKVTCPPTVTVKDEQSGGGNVSSTLLKQHLSLEPCTKTTMQLRKNHSSAQFIDSYICQVCSRGDEDDKLLFCDGCDDNYHIFCLLPPLPEIPRGIWRCPKCILAECKQPPEAFGFEQATQEYTLQSFGEMADSFKSDYFNMPVHMVPTELLEKEFWRLVSSIEEDVTVEYGADIHYKEFGSGFPVSNSKQNLSPEEKEYATSGWNLNVMPVLAQSVLCHINADISGMKVPWLYVGMVFSAFCWHIEDHWSYSINYLHWGEPKTWYGVPSLAAEHLEEVMKMLTPELFDSQPDLLHQLVTLMNPNTLMSHGVPVVRTNQCAGEFVITFPRAYHSGFNQGYNFAEAVNFCTADWLPAGRQCIEHYRRLRRYCVFSHEELICKMAAFPETLDLNLAVAVHKEMFIMVQEERRLRKALLEKGVTEAEREAFELLPDDERQCIKCKTTCFLSALACYDCPDGLVCLSHINDLCKCSSSRQYLRYRYTLDELPTMLHKLKIRAESFDTWANKVRVALEVEDGRKRSFEELRALESEARERRFPNSELLQRLKNCLSEVEACIAQVLGLVSGQVARMDTPQLTLTELRVLLEQMGSLPCAMHQIGDVKDVLEQVEAYQDEAREALATLPSSPGLLRSLLERGQQLGVEVPEAHQLQQQVEQAQWLDEVKQALAPSAHRGSLVIMQGLLVMGAKIASSPSVDKARAELQELLTIAERWEEKAHFCLEARQKHPPATLEAIIRETENIPVHLPNIQALKEALTKAQAWIADVDEIQNGDHYPCLDDLEGLVAVGRDLPVGLEELRQLELQVLTAHSWREKASKTFLKKNSCYTLLEVLCPCADAGSDSTKRSRWMEKALGLYQCDTELLGLSAQDLRDPGSLIVAFKEGEQKEKEGILQLRRTNSAKPSPLAPSLMASSPTSICVCGQVPAGVGALQCDLCQDWFHGQCVSVPHLLTSPKPSLTSSPLLAWWEWDTKFLCPLCMRSRRPRLETILALLVALQRLPVRLPEGEALQCLTERAIGWQDRARKALASEDVTALLRHLAELRQQLQAKPRPVYTSATACDPIREGSGNNISKVQGLLENGDSVISPENMAPGKGSDLELLSSLLPQLTGPVLELPEAIRAPLEELMMEGDLLEVTLDENHSIWQLLQAGQPPDLDRIRTLLELEKFEHQGSRTRSRALERRRRQQKVDQGRNVENLVQQELQSKRARSSGIMSQVGREEEHYQEKADRENMFLTPSTDHSPSLKGNQNSLQHKDSGSSAACPSLMPWLQLSYSDEQQL.

In terms of domain architecture, JmjN spans 14-55; sequence CPVFEPSWAEFQDPLGYIAKIRPIAEKSGICKIRPPADWQPP. Residues 79–169 form the ARID domain; sequence TRVKLNYLDQ…IIYPYEMFQS (91 aa). The tract at residues 192-227 is disordered; sequence PHSIPLRQSVQPSKFSSYSRRAKRLQPDPEPTEEDI. The segment covering 197-210 has biased composition (polar residues); that stretch reads LRQSVQPSKFSSYS. Glycyl lysine isopeptide (Lys-Gly) (interchain with G-Cter in SUMO2) cross-links involve residues K205, K229, K244, and K272. A phosphoserine mark is found at S291 and S307. The segment at 314 to 364 adopts a PHD-type 1 zinc-finger fold; sequence SYICQVCSRGDEDDKLLFCDGCDDNYHIFCLLPPLPEIPRGIWRCPKCILA. Y430 is a binding site for 2-oxoglutarate. A JmjC domain is found at 458-624; the sequence is EYATSGWNLN…AGRQCIEHYR (167 aa). H504 and E506 together coordinate Fe cation. 2-oxoglutarate is bound by residues S512, N514, and K522. H592 contributes to the Fe cation binding site. Residues 697-749 form a C5HC2 zinc finger; that stretch reads CIKCKTTCFLSALACYDCPDGLVCLSHINDLCKCSSSRQYLRYRYTLDELPTM. S884 bears the Phosphoserine mark. The PHD-type 2 zinc finger occupies 1174–1235; sequence ICVCGQVPAG…DTKFLCPLCM (62 aa). S1342 is subject to Phosphoserine. The interval 1425–1519 is disordered; sequence HQGSRTRSRA…KDSGSSAACP (95 aa). The segment covering 1428 to 1441 has biased composition (basic residues); that stretch reads SRTRSRALERRRRQ. Positions 1473 to 1487 are enriched in basic and acidic residues; that stretch reads GREEEHYQEKADREN. Over residues 1490 to 1517 the composition is skewed to polar residues; the sequence is LTPSTDHSPSLKGNQNSLQHKDSGSSAA.

The protein belongs to the JARID1 histone demethylase family. As to quaternary structure, interacts withPCGF6, MSH5, ZMYND8, AR. It depends on L-ascorbate as a cofactor. Fe(2+) serves as cofactor.

The protein localises to the nucleus. The enzyme catalyses N(6),N(6),N(6)-trimethyl-L-lysyl(4)-[histone H3] + 3 2-oxoglutarate + 3 O2 = L-lysyl(4)-[histone H3] + 3 formaldehyde + 3 succinate + 3 CO2. Histone demethylase that specifically demethylates 'Lys-4' of histone H3, thereby playing a central role in histone code. Does not demethylate histone H3 'Lys-9', H3 'Lys-27', H3 'Lys-36', H3 'Lys-79' or H4 'Lys-20'. Demethylates trimethylated and dimethylated but not monomethylated H3 'Lys-4'. May play a role in spermatogenesis. Involved in transcriptional repression of diverse metastasis-associated genes; in this function seems to cooperate with ZMYND8. Suppresses prostate cancer cell invasion. Regulates androgen receptor (AR) transcriptional activity by demethylating H3K4me3 active transcription marks. In Pan troglodytes (Chimpanzee), this protein is Lysine-specific demethylase 5D (KDM5D).